Here is a 386-residue protein sequence, read N- to C-terminus: Ovalbumin (386 aa).

Glycine 2 is modified (N-acetylglycine). At serine 69 the chain carries Phosphoserine. Residues cysteine 74 and cysteine 121 are joined by a disulfide bond. Asparagine 293 carries an N-linked (GlcNAc...) asparagine glycan. The residue at position 345 (serine 345) is a Phosphoserine.

This sequence belongs to the serpin family. Ov-serpin subfamily. Post-translationally, the N-terminus is blocked.

The protein localises to the secreted. Its function is as follows. Storage protein of egg white. Lacks protease inhibitory activity. The protein is Ovalbumin (SERPINB14) of Dromaius novaehollandiae (Emu).